The primary structure comprises 313 residues: Maintenance of mitochondrial morphology protein 1 (313 aa).

Topologically, residues 1-12 (MIHLPQGSFTQG) are lumenal. Residues 13–33 (LIVGQLLTLAIIYVFLRFFLF) traverse the membrane as a helical segment. Topologically, residues 34 to 313 (CSPIPKSVAN…APQEESSNED (280 aa)) are cytoplasmic. Positions 42-63 (ANSPKQTGNETPDETPSTPLSN) are enriched in polar residues. Residues 42–65 (ANSPKQTGNETPDETPSTPLSNNK) form a disordered region. In terms of domain architecture, SMP-LTD spans 90–288 (EPESLDWFNV…SPQFQQIAIP (199 aa)).

This sequence belongs to the MMM1 family. As to quaternary structure, homodimer. Component of the ER-mitochondria encounter structure (ERMES) or MDM complex, composed of mmm1, mdm10, mdm12 and mdm34. A mmm1 homodimer associates with one molecule of mdm12 on each side in a pairwise head-to-tail manner, and the SMP-LTD domains of mmm1 and mdm12 generate a continuous hydrophobic tunnel for phospholipid trafficking.

It is found in the endoplasmic reticulum membrane. In terms of biological role, component of the ERMES/MDM complex, which serves as a molecular tether to connect the endoplasmic reticulum (ER) and mitochondria. Components of this complex are involved in the control of mitochondrial shape and protein biogenesis, and function in nonvesicular lipid trafficking between the ER and mitochondria. The mdm12-mmm1 subcomplex functions in the major beta-barrel assembly pathway that is responsible for biogenesis of all outer membrane beta-barrel proteins, and acts in a late step after the SAM complex. The mdm10-mdm12-mmm1 subcomplex further acts in the TOM40-specific pathway after the action of the mdm12-mmm1 complex. Essential for establishing and maintaining the structure of mitochondria and maintenance of mtDNA nucleoids. This Schizosaccharomyces pombe (strain 972 / ATCC 24843) (Fission yeast) protein is Maintenance of mitochondrial morphology protein 1.